Consider the following 524-residue polypeptide: Zinc finger protein GLIS2 (524 aa).

The interaction with CTNND1 stretch occupies residues 35-174; it reads ALHRELGLVD…PKQLVCRWAK (140 aa). 2 disordered regions span residues 39 to 62 and 84 to 114; these read ELGL…FLLN and SPPS…VPSA. The tract at residues 71–137 is transcription activation; it reads GRFSAAPLVD…SSFQFFLPLG (67 aa). The segment covering 84-100 has biased composition (low complexity); that stretch reads SPPSGLDSPNGSSSLSP. Residues 148–171 form a transcription repression region; that stretch reads SFLTPPKDKCLSPDLPLPKQLVCR. The C2H2-type 1 zinc finger occupies 168–193; the sequence is LVCRWAKCNQLFELLQDLVDHVNDYH. The segment at 202-229 adopts a C2H2-type 2; atypical zinc-finger fold; sequence YCCHWEGCARHGRGFNARYKMLIHIRTH. C2H2-type zinc fingers lie at residues 235–257, 263–287, and 293–317; these read HRCP…NRSH, YVCP…TRTH, and YYCK…IKAH. The tract at residues 439–480 is disordered; the sequence is GGKAEGEKGRGSVPTRALGMEGHKTPLERTESSCSRPSPDGL. The span at 459 to 469 shows a compositional bias: basic and acidic residues; it reads EGHKTPLERTE.

The protein belongs to the GLI C2H2-type zinc-finger protein family. Interacts with CTBP1 and HDAC3. Interacts with CTNNB1. Interacts with SUFU. Interacts with CTNND1. In terms of processing, C-terminus cleavage is induced by interaction with CTNND1 and enhanced by Src tyrosine kinase. Expressed at high levels in kidney and at low levels in heart, lung and placenta. Expressed in colon.

Its subcellular location is the nucleus speckle. It is found in the cytoplasm. In terms of biological role, can act either as a transcriptional repressor or as a transcriptional activator, depending on the cell context. Acts as a repressor of the Hedgehog signaling pathway. Represses the Hedgehog-dependent expression of Wnt4. Necessary to maintain the differentiated epithelial phenotype in renal cells through the inhibition of SNAI1, which itself induces the epithelial-to-mesenchymal transition. Represses transcriptional activation mediated by CTNNB1 in the Wnt signaling pathway. May act by recruiting the corepressors CTBP1 and HDAC3. May be involved in neuron differentiation. This Homo sapiens (Human) protein is Zinc finger protein GLIS2 (GLIS2).